Here is a 771-residue protein sequence, read N- to C-terminus: Kojibiose phosphorylase (771 aa).

358 to 359 is a binding site for substrate; sequence WD. The active-site Proton donor is glutamate 498. Residue 611 to 612 participates in substrate binding; it reads KQ.

This sequence belongs to the glycosyl hydrolase 65 family.

The catalysed reaction is kojibiose + phosphate = beta-D-glucose 1-phosphate + D-glucose. In terms of biological role, catalyzes the reversible phosphorolysis of kojibiose into beta-D-glucose 1-phosphate (Glc1P) and D-glucose. The polypeptide is Kojibiose phosphorylase (kojP) (Caldanaerobacter subterraneus subsp. tengcongensis (strain DSM 15242 / JCM 11007 / NBRC 100824 / MB4) (Thermoanaerobacter tengcongensis)).